The primary structure comprises 35 residues: Delta-theraphotoxin-Hm1a (35 aa).

Intrachain disulfides connect Cys-2/Cys-16, Cys-9/Cys-21, and Cys-15/Cys-28.

Belongs to the neurotoxin 10 (Hwtx-1) family. 09 (HaTx) subfamily. Expressed by the venom gland.

The protein resides in the secreted. Gating-modifier toxin that potently inhibits inactivation of the mammalian Nav1.1/SCN1A sodium channel (EC(50)=38 nM). Also moderately inhibits inactivation of Nav1.2/SCN2A (EC(50)=236 nM) and Nav1.3/SCN3A (EC(50)=220 nM) when the channels are expressed in oocytes without the beta-1 auxiliary subunit. Does not inhibit inactivation of Nav1.2/SCN2A when the channel is coexpressed with the beta-1 auxiliary subunit. When tested on Nav1.1/SCN1A channel, it enhances peak current amplitude and potently delays channel inactivation in a dose-dependent manner, leading to a large sustained current. It has no effect on the voltage-dependence of steady-state activation, and induces a depolarizing shift in the voltage dependence of inactivation. In addition, it does not modify the recovery from fast inactivation in Nav1.1/SCN1A. The binding affinity and subtype selectivity of the toxin towards Nav1.1/SCN1A channel is determined by residues within both the S1-S2 and S3-S4 loops of the domain IV voltage sensor of the channel. This toxin also weakly inhibits several subtypes of voltage-gated potassium channels. It moderately blocks Kv2.1/KCNB1 (23% inhibition at 100 nM), Kv2.2/KCNB2 (19.7% at 100 nM and 51% at 300 nM), Kv4.1/KCND1 (IC(50)=280 nM), Kv4.2/KCND2 (39% at 300 nM) and Kv4.3/KCND3 (43% at 300 nM). In vivo, intracerebroventricular injection into mice elicits convulsions, spasms, tremors and rapid death. When injected into mouse hindpaw, the toxin elicits an immediate and robust response to pain. However, intraplantar injection of toxin does not cause neurogenic inflammation or alter sensitivity to heat, indicative of a modality-specific effect on mechanosensitive neurons. In Dravet syndrome mice model, intracerebroventricular infusion of this peptide rescues mice from seizures and premature death. The sequence is that of Delta-theraphotoxin-Hm1a from Heteroscodra maculata (Togo starburst tarantula).